Reading from the N-terminus, the 1002-residue chain is UPF0182 protein Mvan_1814 (1002 aa).

The next 7 helical transmembrane spans lie at 16 to 36 (VMIA…RLVD), 61 to 81 (LLLF…AMAL), 112 to 132 (LVGI…AQNY), 174 to 194 (FAAT…FGGI), 209 to 229 (IQLI…YWLD), 258 to 278 (KLIL…AIVL), and 286 to 306 (IGVV…PLVV). Positions 891–958 (LFGPGADATA…TGPTQLSAGK (68 aa)) are disordered. Over residues 893–923 (GPGADATATGPAATEPPAGQAPQPQGNNQPP) the composition is skewed to low complexity. The segment covering 937 to 950 (PQQPEVPVAVPPTG) has biased composition (pro residues).

This sequence belongs to the UPF0182 family.

It is found in the cell membrane. This is UPF0182 protein Mvan_1814 from Mycolicibacterium vanbaalenii (strain DSM 7251 / JCM 13017 / BCRC 16820 / KCTC 9966 / NRRL B-24157 / PYR-1) (Mycobacterium vanbaalenii).